The chain runs to 122 residues: MEPTPMLRDRDHDDAPPTYEQAMGLCPTTVSTPPPPPPDCSPPPYRPPYCLVSSPSPRHTFDMDMMEMPATMHPTTGAYFDNGWKWTFALLVVAILGIIFLAVVFTVVINRDNSTATGTSSG.

The disordered stretch occupies residues 1–47 (MEPTPMLRDRDHDDAPPTYEQAMGLCPTTVSTPPPPPPDCSPPPYRP). Short sequence motifs (PPXY motif) lie at residues 16–19 (PPTY) and 42–45 (PPPY). Positions 32-47 (TPPPPPPDCSPPPYRP) are enriched in pro residues. Residues 89-109 (ALLVVAILGIIFLAVVFTVVI) traverse the membrane as a helical segment.

Belongs to the Cytomegalovirus UL42 protein family. Interacts with host ITCH; this interaction induces the ubiquitination and subsequent degradation of ITCH. Interacts with host STING1. Interacts with CGAS.

It is found in the host membrane. It localises to the host cytoplasm. Functionally, plays a role in the inhibition of host innate immune response to promote latent infection. Mechanistically, suppresses viral DNA-triggered signaling by impairing DNA binding and oligomerization of CGAS. Also impairs the translocation of host STING1 from the endoplasmic reticulum to perinuclear punctate structures which is an essential step for its activation. Regulates the function of host NEDD4 family ubiquitin E3 ligases through its PPxY motif and thereby prevents the excessive ubiquitination of gB and its degradation by inhibiting these E3 ligases. This chain is Protein UL42 (UL42), found in Human cytomegalovirus (strain Towne) (HHV-5).